A 564-amino-acid chain; its full sequence is Dihydroxy-acid dehydratase (564 aa).

Asp80 lines the Mg(2+) pocket. Cys121 is a binding site for [2Fe-2S] cluster. Residues Asp122 and Lys123 each contribute to the Mg(2+) site. Lys123 is subject to N6-carboxylysine. Position 194 (Cys194) interacts with [2Fe-2S] cluster. Glu447 lines the Mg(2+) pocket. Residue Ser473 is the Proton acceptor of the active site.

Belongs to the IlvD/Edd family. Homodimer. Requires [2Fe-2S] cluster as cofactor. The cofactor is Mg(2+).

It carries out the reaction (2R)-2,3-dihydroxy-3-methylbutanoate = 3-methyl-2-oxobutanoate + H2O. It catalyses the reaction (2R,3R)-2,3-dihydroxy-3-methylpentanoate = (S)-3-methyl-2-oxopentanoate + H2O. The protein operates within amino-acid biosynthesis; L-isoleucine biosynthesis; L-isoleucine from 2-oxobutanoate: step 3/4. It functions in the pathway amino-acid biosynthesis; L-valine biosynthesis; L-valine from pyruvate: step 3/4. In terms of biological role, functions in the biosynthesis of branched-chain amino acids. Catalyzes the dehydration of (2R,3R)-2,3-dihydroxy-3-methylpentanoate (2,3-dihydroxy-3-methylvalerate) into 2-oxo-3-methylpentanoate (2-oxo-3-methylvalerate) and of (2R)-2,3-dihydroxy-3-methylbutanoate (2,3-dihydroxyisovalerate) into 2-oxo-3-methylbutanoate (2-oxoisovalerate), the penultimate precursor to L-isoleucine and L-valine, respectively. In Listeria monocytogenes serotype 4a (strain HCC23), this protein is Dihydroxy-acid dehydratase.